The primary structure comprises 159 residues: Large ribosomal subunit protein uL15 (159 aa).

Over residues 1–18 (MKLNEIKDNEGSSKDRIR) the composition is skewed to basic and acidic residues. The disordered stretch occupies residues 1-39 (MKLNEIKDNEGSSKDRIRVGRGIGSGKGKTGGRGVKGQK). Gly residues predominate over residues 21 to 35 (RGIGSGKGKTGGRGV).

Belongs to the universal ribosomal protein uL15 family. Part of the 50S ribosomal subunit.

Its function is as follows. Binds to the 23S rRNA. This Allorhizobium ampelinum (strain ATCC BAA-846 / DSM 112012 / S4) (Agrobacterium vitis (strain S4)) protein is Large ribosomal subunit protein uL15.